Here is a 565-residue protein sequence, read N- to C-terminus: Phospholipase B-like protein C (565 aa).

The signal sequence occupies residues Met-1–Cys-21. N-linked (GlcNAc...) asparagine glycosylation is found at Asn-53, Asn-84, Asn-118, Asn-200, Asn-201, Asn-211, Asn-266, Asn-302, Asn-406, and Asn-485.

Belongs to the phospholipase B-like family.

Its subcellular location is the secreted. Probable phospholipase. This chain is Phospholipase B-like protein C (plbC), found in Dictyostelium discoideum (Social amoeba).